A 657-amino-acid polypeptide reads, in one-letter code: C4-dicarboxylate transport sensor protein DctS (657 aa).

At 1-26 (MRDTTGGPAGAEVWTVPGLLGARKLD) the chain is on the cytoplasmic side. Residues 27 to 51 (LLALIPLVAIVALMTLVGALLFAVA) traverse the membrane as a helical segment. Topologically, residues 52–252 (QSDANRARAK…AYDAPDAFGN (201 aa)) are periplasmic. Residues 253-273 (AALLAAIGALSVFAVLAMVVL) form a helical membrane-spanning segment. At 274–657 (HRNALRRRMA…LPVPQEGAPA (384 aa)) the chain is on the cytoplasmic side. A PAS domain is found at 289–361 (AEMAFRRAME…ARQRQLIEGQ (73 aa)). The 53-residue stretch at 365-417 (QAFETRFRRSDGSEIEVQVFEAPLIDAGGRHRGWMGSVIDITQAKQAARLARA) folds into the PAC domain. The tract at residues 407–422 (QAKQAARLARAQDESL) is inter-domain linker. The Histidine kinase domain occupies 437–652 (TLAHELNQPL…VFTVTLPVPQ (216 aa)). Phosphohistidine; by autocatalysis is present on H440.

Its subcellular location is the cell inner membrane. The enzyme catalyses ATP + protein L-histidine = ADP + protein N-phospho-L-histidine.. Member of the two-component regulatory system DctS/DctR involved in the transport of C4-dicarboxylates. DctS functions as a membrane-associated protein kinase that phosphorylates DctR in response to environmental signals. The protein is C4-dicarboxylate transport sensor protein DctS (dctS) of Rhodobacter capsulatus (Rhodopseudomonas capsulata).